The chain runs to 190 residues: Potassium-transporting ATPase KdpC subunit (190 aa).

Residues 13 to 33 traverse the membrane as a helical segment; sequence VGFLLLTLMCGVVYPGIVTIF.

The protein belongs to the KdpC family. The system is composed of three essential subunits: KdpA, KdpB and KdpC.

It localises to the cell membrane. In terms of biological role, part of the high-affinity ATP-driven potassium transport (or Kdp) system, which catalyzes the hydrolysis of ATP coupled with the electrogenic transport of potassium into the cytoplasm. This subunit acts as a catalytic chaperone that increases the ATP-binding affinity of the ATP-hydrolyzing subunit KdpB by the formation of a transient KdpB/KdpC/ATP ternary complex. This is Potassium-transporting ATPase KdpC subunit from Listeria monocytogenes serotype 4a (strain HCC23).